A 97-amino-acid chain; its full sequence is M-zodatoxin-Lt7a (97 aa).

Residues 1–22 (MKFYVVALALLVAFVCIAESRS) form the signal peptide. The propeptide occupies 23 to 63 (VETERAVDADLEDDLDDLEEYLEGIAEALELEDFPDTEEAR). Positions 60–63 (EEAR) match the Processing quadruplet motif motif.

In terms of processing, cleavage of the propeptide depends on the processing quadruplet motif (XXXR, with at least one of X being E). Expressed by the venom gland.

The protein resides in the secreted. In terms of biological role, does not have antimicrobial or antifungal activity. Does not have hemolytic activity against rabbit erythrocytes. However, it causes some conductance changes in planar bilayer membranes, without membrane rupture, suggesting a cytolytic function on other biological targets. It causes paralysis, but is not lethal when injected into insect (M.domestica) larvae. This Lachesana tarabaevi (Spider) protein is M-zodatoxin-Lt7a.